Reading from the N-terminus, the 347-residue chain is MLVLGIETSCDETGVALYHTQQGLLSHALYSQIEMHGEYGGVVPELASRDHIRRLLPLIRQIFAEAGVSLRDLDAIAYTQGPGLAGALLVGASVAAALGFALKVPVLGIHHLEGHLLSPLLSDPAPAFPFVALLVSGGHTQLMEVTGLGQYRLLGETVDDAAGEAFDKTAKLLGLGYPGGPALSRLADEFTRSGQSARFELPRPMLHSGDFNFSFSGLKTAVLTLVNKHEMTPQIRGAIAQAFQEAAVEVLTEKSLAALAKTGLTQLVVAGGVGANRQLRSNLDRRAGTIGATVYYPKLEFCTDNGAMIAFAGAMRLESGESESSRLGKFTINARWDLEMQEIGREA.

2 residues coordinate Fe cation: H111 and H115. Substrate contacts are provided by residues 134–138, D167, G180, and N276; that span reads LVSGG. D304 lines the Fe cation pocket.

Belongs to the KAE1 / TsaD family. Fe(2+) serves as cofactor.

The protein localises to the cytoplasm. It catalyses the reaction L-threonylcarbamoyladenylate + adenosine(37) in tRNA = N(6)-L-threonylcarbamoyladenosine(37) in tRNA + AMP + H(+). Its function is as follows. Required for the formation of a threonylcarbamoyl group on adenosine at position 37 (t(6)A37) in tRNAs that read codons beginning with adenine. Is involved in the transfer of the threonylcarbamoyl moiety of threonylcarbamoyl-AMP (TC-AMP) to the N6 group of A37, together with TsaE and TsaB. TsaD likely plays a direct catalytic role in this reaction. In Nitrosospira multiformis (strain ATCC 25196 / NCIMB 11849 / C 71), this protein is tRNA N6-adenosine threonylcarbamoyltransferase.